The sequence spans 1011 residues: Protein translocase subunit SecA, chloroplastic (1011 aa).

Over residues 1–17 (MATSSLCSSFTSQTCNP) the composition is skewed to polar residues. The segment at 1-22 (MATSSLCSSFTSQTCNPHSRPH) is disordered. The transit peptide at 1–59 (MATSSLCSSFTSQTCNPHSRPHRKTLTLPGSVFLCRQFHLNSPSVSKTRRIRTRQSGPV) directs the protein to the chloroplast. 164–171 (MRTGEGKT) is an ATP binding site. Residues 976–1011 (QDKMENQKSGKRNARPPTDTNPDPVGTVEPSTSASS) are disordered.

This sequence belongs to the SecA family.

It is found in the plastid. It localises to the chloroplast stroma. Its subcellular location is the chloroplast thylakoid membrane. The catalysed reaction is ATP + H2O + chloroplast-proteinSide 1 = ADP + phosphate + chloroplast-proteinSide 2.. Its function is as follows. Has a central role in coupling the hydrolysis of ATP to the transfer of proteins across the thylakoid membrane. Facilitates the transport of precursor proteins from the chloroplast stroma to thylakoid lumen. In Pisum sativum (Garden pea), this protein is Protein translocase subunit SecA, chloroplastic.